Here is a 96-residue protein sequence, read N- to C-terminus: Co-chaperonin GroES (96 aa).

Belongs to the GroES chaperonin family. In terms of assembly, heptamer of 7 subunits arranged in a ring. Interacts with the chaperonin GroEL.

It localises to the cytoplasm. Together with the chaperonin GroEL, plays an essential role in assisting protein folding. The GroEL-GroES system forms a nano-cage that allows encapsulation of the non-native substrate proteins and provides a physical environment optimized to promote and accelerate protein folding. GroES binds to the apical surface of the GroEL ring, thereby capping the opening of the GroEL channel. This is Co-chaperonin GroES from Photobacterium profundum (strain SS9).